The sequence spans 315 residues: MQIKLANPRGFCAGVDRAIEIVNRALEVFGPPIYVRHEVVHNKFVVEDLRSRGAIFVEELDQVPDDVIVIFSAHGVSQAVRTEAAGRGLKVFDATCPLVTKVHIEVARYSRDGRECILIGHAGHPEVEGTMGQYDAANGGAIYLVEDEEDVASLQVRNPEALAFVTQTTLSMDDTSRVIDALRKRFPAIGGPRKDDICYATQNRQDAVKQLADECDVVLVVGSPNSSNSNRLRELAERMATPAYLIDGAEDMQQGWFDGVERIGITAGASAPEVLVRGVIQQLQAWGATGADELAGREENITFSMPKELRVKSLL.

Cysteine 12 lines the [4Fe-4S] cluster pocket. (2E)-4-hydroxy-3-methylbut-2-enyl diphosphate is bound by residues histidine 41 and histidine 74. 2 residues coordinate dimethylallyl diphosphate: histidine 41 and histidine 74. Residues histidine 41 and histidine 74 each coordinate isopentenyl diphosphate. Cysteine 96 lines the [4Fe-4S] cluster pocket. Histidine 124 is a binding site for (2E)-4-hydroxy-3-methylbut-2-enyl diphosphate. Residue histidine 124 coordinates dimethylallyl diphosphate. An isopentenyl diphosphate-binding site is contributed by histidine 124. Residue glutamate 126 is the Proton donor of the active site. Threonine 168 is a binding site for (2E)-4-hydroxy-3-methylbut-2-enyl diphosphate. Cysteine 198 provides a ligand contact to [4Fe-4S] cluster. Residues serine 226, serine 227, asparagine 228, and serine 270 each coordinate (2E)-4-hydroxy-3-methylbut-2-enyl diphosphate. Positions 226, 227, 228, and 270 each coordinate dimethylallyl diphosphate. 4 residues coordinate isopentenyl diphosphate: serine 226, serine 227, asparagine 228, and serine 270.

It belongs to the IspH family. [4Fe-4S] cluster is required as a cofactor.

It carries out the reaction isopentenyl diphosphate + 2 oxidized [2Fe-2S]-[ferredoxin] + H2O = (2E)-4-hydroxy-3-methylbut-2-enyl diphosphate + 2 reduced [2Fe-2S]-[ferredoxin] + 2 H(+). It catalyses the reaction dimethylallyl diphosphate + 2 oxidized [2Fe-2S]-[ferredoxin] + H2O = (2E)-4-hydroxy-3-methylbut-2-enyl diphosphate + 2 reduced [2Fe-2S]-[ferredoxin] + 2 H(+). Its pathway is isoprenoid biosynthesis; dimethylallyl diphosphate biosynthesis; dimethylallyl diphosphate from (2E)-4-hydroxy-3-methylbutenyl diphosphate: step 1/1. It participates in isoprenoid biosynthesis; isopentenyl diphosphate biosynthesis via DXP pathway; isopentenyl diphosphate from 1-deoxy-D-xylulose 5-phosphate: step 6/6. Functionally, catalyzes the conversion of 1-hydroxy-2-methyl-2-(E)-butenyl 4-diphosphate (HMBPP) into a mixture of isopentenyl diphosphate (IPP) and dimethylallyl diphosphate (DMAPP). Acts in the terminal step of the DOXP/MEP pathway for isoprenoid precursor biosynthesis. In Pseudomonas syringae pv. syringae (strain B728a), this protein is 4-hydroxy-3-methylbut-2-enyl diphosphate reductase.